The following is a 149-amino-acid chain: Large ribosomal subunit protein eL19 (149 aa).

The segment at 45–94 is disordered; the sequence is VADGTIDAEDTQGNSRGRARERDAKESYGHKKGAGSRKGKAGARQNEKRE. Positions 62-73 are enriched in basic and acidic residues; sequence RARERDAKESYG. The span at 74-85 shows a compositional bias: basic residues; it reads HKKGAGSRKGKA.

This sequence belongs to the eukaryotic ribosomal protein eL19 family. In terms of assembly, part of the 50S ribosomal subunit.

Functionally, binds to the 23S rRNA. This is Large ribosomal subunit protein eL19 from Halobacterium salinarum (strain ATCC 700922 / JCM 11081 / NRC-1) (Halobacterium halobium).